Consider the following 377-residue polypeptide: Mitochondrial pyrimidine nucleotide transporter RIM2 (377 aa).

Solcar repeat units lie at residues 50 to 163, 173 to 262, and 286 to 375; these read VKPW…TKDM, ETPM…MKRL, and KEWC…VIRL. The next 6 membrane-spanning stretches (helical) occupy residues 53 to 73, 131 to 151, 179 to 199, 238 to 258, 286 to 306, and 347 to 368; these read WVHF…TCPF, GFRS…PARS, LMAA…IWLI, GLSA…LYEQ, KEWC…SIAT, and MYSG…MFGT.

The protein belongs to the mitochondrial carrier (TC 2.A.29) family.

The protein resides in the mitochondrion inner membrane. The catalysed reaction is 5-methyl-UTP(out) + UTP(in) = 5-methyl-UTP(in) + UTP(out). Its function is as follows. Mitochondrial transporter that imports/exports pyrimidine nucleotides into and from mitochondria. Selectively transports uridine, thymidine, and cytosine (deoxy)nucleoside di- and triphosphates by an antiport mechanism. Also transports, with lower efficiency, uridine, thymidine, and cytosine (deoxy)nucleoside monophosphates as well as guanosine (deoxy)nucleoside di- and triphosphate. May import (deoxy)nucleoside triphosphates in exchange for intramitochondrial (deoxy)nucleoside monophosphates, thus providing precursors necessary for de novo synthesis of mitochondrial DNA and RNA while exporting products of their catabolism. Mediates the transport of iron and other divalent metal ions like copper and zinc across the mitochondrial inner membrane in a pyrimidine nucleotide-dependent fashion. Catalyzes the co-import of pyrimidine nucleotides and divalent metal ions including ferrous iron. Participates in mitochondrial genome maintenance, regulation of mitochondrial membrane potential and mitochondrial respiration. The protein is Mitochondrial pyrimidine nucleotide transporter RIM2 (RIM2) of Saccharomyces cerevisiae (strain ATCC 204508 / S288c) (Baker's yeast).